Here is a 210-residue protein sequence, read N- to C-terminus: Na(+)-translocating NADH-quinone reductase subunit D (210 aa).

5 helical membrane-spanning segments follow: residues 42–62, 72–92, 103–123, 131–151, and 178–198; these read FVMT…VSLI, IIVQ…VLKA, VFVS…AFAM, FIDG…VAFF, and NGLM…IWAI.

Belongs to the NqrDE/RnfAE family. In terms of assembly, composed of six subunits; NqrA, NqrB, NqrC, NqrD, NqrE and NqrF.

It is found in the cell inner membrane. It carries out the reaction a ubiquinone + n Na(+)(in) + NADH + H(+) = a ubiquinol + n Na(+)(out) + NAD(+). Its function is as follows. NQR complex catalyzes the reduction of ubiquinone-1 to ubiquinol by two successive reactions, coupled with the transport of Na(+) ions from the cytoplasm to the periplasm. NqrA to NqrE are probably involved in the second step, the conversion of ubisemiquinone to ubiquinol. This Aliivibrio fischeri (strain ATCC 700601 / ES114) (Vibrio fischeri) protein is Na(+)-translocating NADH-quinone reductase subunit D.